Consider the following 99-residue polypeptide: Small ribosomal subunit protein uS19 (99 aa).

This sequence belongs to the universal ribosomal protein uS19 family.

In terms of biological role, protein S19 forms a complex with S13 that binds strongly to the 16S ribosomal RNA. The protein is Small ribosomal subunit protein uS19 of Sulfurihydrogenibium sp. (strain YO3AOP1).